Consider the following 839-residue polypeptide: Toll-like receptor 4 (839 aa).

The N-terminal stretch at 1-23 (MMSASRLAGTLIPAMAFLSCVRP) is a signal peptide. Topologically, residues 24–631 (ESWEPCVEVV…SLNITCQMNK (608 aa)) are extracellular. Cys-29 and Cys-40 are joined by a disulfide. Asn-35 carries an N-linked (GlcNAc...) asparagine glycan. LRR repeat units follow at residues 55–76 (STKNLDLSFNPLRHLGSYSFFS), 79–100 (ELQVLDLSRCEIQTIEDGAYQS), 103–124 (HLSTLILTGNPIQSLALGAFSG), 127–148 (SLQKLVAVETNLASLENFPIGH), and 151–172 (TLKELNVAHNLIQSFKLPEYFS). An N-linked (GlcNAc...) asparagine glycan is attached at Asn-173. LRR repeat units follow at residues 176-199 (NLEHLDLSSNKIQSIYCTDLRVLH), 205-225 (NLSLDLSLNPMNFIQPGAFKE), and 227-247 (RLHKLTLRNNFDSLNVMKTCI). Residue Asn-205 is glycosylated (N-linked (GlcNAc...) asparagine). A disulfide bridge links Cys-281 with Cys-306. N-linked (GlcNAc...) asparagine glycosylation is found at Asn-282 and Asn-309. 10 LRR repeats span residues 331–351 (GWQHLELVNCKFGQFPTLKLK), 352–373 (SLKRLTFTSNKGGNAFSEVDLP), 374–394 (SLEFLDLSRNGLSFKGCCSQS), 400–422 (SLKYLDLSFNGVITMSSNFLGLE), 423–444 (QLEHLDFQHSNLKQMSEFSVFL), 448–456 (NLIYLDISH), 472–495 (SLEVLKMAGNSFQENFLPDIFTEL), 497–518 (NLTFLDLSQCQLEQLSPTAFNS), 521–542 (SLQVLNMSHNNFFSLDTFPYKC), and 545–565 (SLQVLDYSLNHIMTSKKQELQ). Cys-390 and Cys-391 are joined by a disulfide. N-linked (GlcNAc...) asparagine glycans are attached at residues Asn-497 and Asn-526. Asn-575 carries N-linked (GlcNAc...) asparagine glycosylation. An LRRCT domain is found at 579 to 629 (NDFACTCEHQSFLQWIKDQRQLLVEVERMECATPSDKQGMPVLSLNITCQM). 2 disulfides stabilise this stretch: Cys-583/Cys-609 and Cys-585/Cys-627. N-linked (GlcNAc...) asparagine glycosylation is found at Asn-624 and Asn-630. The helical transmembrane segment at 632 to 652 (TIIGVSVLSVLVVSVVAVLVY) threads the bilayer. Residues 653–839 (KFYFHLMLLA…GCNWQEATSI (187 aa)) lie on the Cytoplasmic side of the membrane. One can recognise a TIR domain in the interval 672-815 (NIYDAFVIYS…IFWRRLRKAL (144 aa)).

This sequence belongs to the Toll-like receptor family. As to quaternary structure, belongs to the lipopolysaccharide (LPS) receptor, a multi-protein complex containing at least CD14, LY96 and TLR4. Binding to bacterial LPS leads to homodimerization. Interacts with LY96 via the extracellular domain. Interacts with MYD88 and TIRAP via their respective TIR domains. Interacts with NOX4. Interacts with CNPY3 and HSP90B1; this interaction is required for proper folding in the endoplasmic reticulum. Interacts with MAP3K21; this interaction leads to negative regulation of TLR4 signaling. Interacts with CD36, following CD36 stimulation by oxLDL or amyloid-beta 42, and forms a heterodimer with TLR6. The trimeric complex is internalized and triggers inflammatory response. LYN kinase activity facilitates TLR4-TLR6 heterodimerization and signal initiation. Interacts with TICAM1 in response to LPS in a WDFY1-dependent manner. Interacts with WDFY1 in response to LPS. Interacts with SMPDL3B. Interacts with CEACAM1; upon lipopolysaccharide stimulation, forms a complex including TLR4 and the phosphorylated form of SYK and CEACAM1, which in turn, recruits PTPN6 that dephosphorylates SYK, reducing the production of reactive oxygen species (ROS) and lysosome disruption, which in turn, reduces the activity of the inflammasome. Interacts with RFTN1; the interaction occurs in response to lipopolysaccharide stimulation. Interacts with SCIMP; the interaction occurs in response to lipopolysaccharide stimulation and is enhanced by phosphorylation of SCIMP by LYN. This interaction facilitates the phosphorylation of TLR4 by LYN which elicits a selective cytokine response in macrophages. Interacts with TRAF3IP3. Interacts with TREM1; this interaction enhances TLR4-mediated inflammatory response. Interacts with ZG16B/PAUF. Interacts with CD82; this interaction inhibits TLR4-mediated signaling pathway. Phosphorylated on tyrosine residues by LYN after binding lipopolysaccharide. In terms of processing, ubiquitinated by RNF128 via 'Lys-28'-linked polyubiquitin chains, leading to proteasomal degradation.

The protein resides in the cell membrane. The protein localises to the early endosome. It localises to the cell projection. It is found in the ruffle. In terms of biological role, transmembrane receptor that functions as a pattern recognition receptor recognizing pathogen- and damage-associated molecular patterns (PAMPs and DAMPs) to induce innate immune responses via downstream signaling pathways. At the plasma membrane, cooperates with LY96 to mediate the innate immune response to bacterial lipopolysaccharide (LPS). Also involved in LPS-independent inflammatory responses triggered by free fatty acids, such as palmitate, and Ni(2+). Mechanistically, acts via MYD88, TIRAP and TRAF6, leading to NF-kappa-B activation, cytokine secretion and the inflammatory response. Alternatively, CD14-mediated TLR4 internalization via endocytosis is associated with the initiation of a MYD88-independent signaling via the TICAM1-TBK1-IRF3 axis leading to type I interferon production. In addition to the secretion of proinflammatory cytokines, initiates the activation of NLRP3 inflammasome and formation of a positive feedback loop between autophagy and NF-kappa-B signaling cascade. In complex with TLR6, promotes inflammation in monocytes/macrophages by associating with TLR6 and the receptor CD86. Upon ligand binding, such as oxLDL or amyloid-beta 42, the TLR4:TLR6 complex is internalized and triggers inflammatory response, leading to NF-kappa-B-dependent production of CXCL1, CXCL2 and CCL9 cytokines, via MYD88 signaling pathway, and CCL5 cytokine, via TICAM1 signaling pathway. In myeloid dendritic cells, vesicular stomatitis virus glycoprotein G but not LPS promotes the activation of IRF7, leading to type I IFN production in a CD14-dependent manner. The chain is Toll-like receptor 4 (TLR4) from Pan paniscus (Pygmy chimpanzee).